The primary structure comprises 444 residues: MSQILTAPQAEALHKAMLAYLSVINAPQTAETLREELHFDESYNEATCKKFEGVLEKKWTGIARLQRRINDLEAEVRSLQAELEASPSAARAKNQDPTNWLPKPSSTHTLTSHRDAVTCVAFHPVFTSLASGSEDCTIKIWDWELGEIERTLKGHIRGVSGLDYGGQKGNTLLASCSSDLTIKLWDPSKDYANIRTLSGHDHSVSSVRFLTSNDNHLISASRDGTLRIWDVSTGFCVKVIKSATESWIRDVSPSFDGKWLVSGGRDQAITVWEVSSAEPKAALLGHENFIECCVFAPPASYEHLATLAGLKKPPPATSSCEFVATGARDKTIKLWEARGRLIKTLHGHDNWVRGLVFHPGGKYLFSVSDDKTIRCWDLSQEGRLVKTISGAHEHFVSCIRWAPSPNTDNPDPAGEKAGKKDAVKPSYRCVIATGCADNSVRVFS.

The LisH domain occupies 9 to 41 (QAEALHKAMLAYLSVINAPQTAETLREELHFDE). The stretch at 60–88 (TGIARLQRRINDLEAEVRSLQAELEASPS) forms a coiled coil. The disordered stretch occupies residues 83–107 (LEASPSAARAKNQDPTNWLPKPSST). WD repeat units follow at residues 112–153 (SHRD…RTLK), 155–195 (HIRG…ANIR), 199–239 (GHDH…CVKV), 243–282 (ATESWIRDVSPSFDGKWLVSGGRDQAITVWEVSSAEPKAA), 285–345 (GHEN…IKTL), 347–386 (GHDNWVRGLVFHPGGKYLFSVSDDKTIRCWDLSQEGRLVK), and 391–437 (AHEH…GCAD).

This sequence belongs to the WD repeat LIS1/nudF family. Interacts with dynein. Self-associates. Interacts with bnfA, nudC and nudE.

The protein localises to the cytoplasm. It localises to the cytoskeleton. Its subcellular location is the spindle pole. Functionally, positively regulates the activity of the minus-end directed microtubule motor protein dynein. May enhance dynein-mediated microtubule sliding by targeting dynein to the microtubule plus end. Required for nuclear migration during vegetative growth as well as development. Required for retrograde early endosome (EE) transport from the hyphal tip. Required for localization of dynein to the mitotic spindle poles. Recruits additional proteins to the dynein complex at SPBs. The sequence is that of Nuclear distribution protein nudF from Emericella nidulans (strain FGSC A4 / ATCC 38163 / CBS 112.46 / NRRL 194 / M139) (Aspergillus nidulans).